Here is a 443-residue protein sequence, read N- to C-terminus: Xaa-Pro dipeptidase (443 aa).

Mn(2+) is bound by residues Asp-241, Asp-252, His-333, Glu-378, and Glu-417.

Belongs to the peptidase M24B family. Bacterial-type prolidase subfamily. Requires Mn(2+) as cofactor.

It catalyses the reaction Xaa-L-Pro dipeptide + H2O = an L-alpha-amino acid + L-proline. Splits dipeptides with a prolyl residue in the C-terminal position. In Actinobacillus pleuropneumoniae serotype 5b (strain L20), this protein is Xaa-Pro dipeptidase.